The primary structure comprises 74 residues: Translation initiation factor IF-1 2 (74 aa).

In terms of domain architecture, S1-like spans 1-73 (MTKNKNVIEV…TRGRIVFRYR (73 aa)).

The protein belongs to the IF-1 family. As to quaternary structure, component of the 30S ribosomal translation pre-initiation complex which assembles on the 30S ribosome in the order IF-2 and IF-3, IF-1 and N-formylmethionyl-tRNA(fMet); mRNA recruitment can occur at any time during PIC assembly.

It is found in the cytoplasm. Its function is as follows. One of the essential components for the initiation of protein synthesis. Stabilizes the binding of IF-2 and IF-3 on the 30S subunit to which N-formylmethionyl-tRNA(fMet) subsequently binds. Helps modulate mRNA selection, yielding the 30S pre-initiation complex (PIC). Upon addition of the 50S ribosomal subunit IF-1, IF-2 and IF-3 are released leaving the mature 70S translation initiation complex. The chain is Translation initiation factor IF-1 2 from Streptomyces avermitilis (strain ATCC 31267 / DSM 46492 / JCM 5070 / NBRC 14893 / NCIMB 12804 / NRRL 8165 / MA-4680).